We begin with the raw amino-acid sequence, 188 residues long: MSPTPAHLNFITGNKNKLAEVQAILAGVIELRNENIDLVEIQGSVEDVTTDKARRAAEAIKGPVLVEDTCLCFKAMNDLPGPYIKWFMQSLGAAQMHKLLAGFDDKSAQAVCTFAYCEGPGHEPVLFQGRTDGKLVESRGPTAFGWDSCFEYKGQTYAEMDKSEKNKISHRGKALEKLKEWLAQKVDA.

12-17 serves as a coordination point for ITP; the sequence is TGNKNK. Glu-40 contributes to the Mg(2+) binding site. ITP contacts are provided by residues Lys-52, 68–69, Lys-85, 144–147, Lys-165, and 170–171; these read DT, FGWD, and HR.

The protein belongs to the HAM1 NTPase family. Homodimer. Requires Mg(2+) as cofactor. Mn(2+) is required as a cofactor.

It is found in the cytoplasm. Its subcellular location is the nucleus. It catalyses the reaction ITP + H2O = IMP + diphosphate + H(+). The catalysed reaction is dITP + H2O = dIMP + diphosphate + H(+). It carries out the reaction XTP + H2O = XMP + diphosphate + H(+). Its function is as follows. Pyrophosphatase that hydrolyzes non-canonical purine nucleotides such as inosine triphosphate (ITP), deoxyinosine triphosphate (dITP) or xanthosine 5'-triphosphate (XTP) to their respective monophosphate derivatives. The enzyme does not distinguish between the deoxy- and ribose forms. Probably excludes non-canonical purines from RNA and DNA precursor pools, thus preventing their incorporation into RNA and DNA and avoiding chromosomal lesions. This Phaeosphaeria nodorum (strain SN15 / ATCC MYA-4574 / FGSC 10173) (Glume blotch fungus) protein is Inosine triphosphate pyrophosphatase.